A 296-amino-acid chain; its full sequence is DNA-3-methyladenine glycosylase (296 aa).

Residue Ser-110 is modified to Phosphoserine. Residue Asp-209 is the Proton acceptor of the active site.

This sequence belongs to the alkylbase DNA glycosidase AlkA family.

It is found in the nucleus. It carries out the reaction Hydrolysis of alkylated DNA, releasing 3-methyladenine, 3-methylguanine, 7-methylguanine and 7-methyladenine.. Its function is as follows. Hydrolysis of the deoxyribose N-glycosidic bond to excise 3-methyladenine or 7-methyladenine from the damaged DNA polymer formed by alkylation lesions. The chain is DNA-3-methyladenine glycosylase (MAG1) from Saccharomyces cerevisiae (strain ATCC 204508 / S288c) (Baker's yeast).